The chain runs to 262 residues: Methanethiol S-methyltransferase (262 aa).

5 helical membrane-spanning segments follow: residues 22–42 (LYSLLSYLFFLMTLLYLIGFV), 55–75 (PGASWPLALLVDVLLITLFAV), 100–120 (ATYVLASSVVLVVMFWLWQPI), 134–154 (AVLTTLFWLGWGLILVATFLI), and 195–215 (GFLMAFWATPEMTVGHLVFAL).

This sequence belongs to the nurim family.

It localises to the membrane. The enzyme catalyses methanethiol + S-adenosyl-L-methionine = dimethyl sulfide + S-adenosyl-L-homocysteine + H(+). Catalyzes the methylation of methanethiol (MeSH) to yield dimethylsulphide (DMS). This Pseudomonas deceptionensis protein is Methanethiol S-methyltransferase.